An 84-amino-acid polypeptide reads, in one-letter code: Cytochrome b559 subunit alpha (84 aa).

A helical membrane pass occupies residues 22-36 (IIHSITIPALFVAGW). His24 provides a ligand contact to heme.

It belongs to the PsbE/PsbF family. In terms of assembly, heterodimer of an alpha subunit and a beta subunit. PSII is composed of 1 copy each of membrane proteins PsbA, PsbB, PsbC, PsbD, PsbE, PsbF, PsbH, PsbI, PsbJ, PsbK, PsbL, PsbM, PsbT, PsbX, PsbY, PsbZ, Psb30/Ycf12, at least 3 peripheral proteins of the oxygen-evolving complex and a large number of cofactors. It forms dimeric complexes. Requires heme b as cofactor.

The protein localises to the plastid. It is found in the chloroplast thylakoid membrane. In terms of biological role, this b-type cytochrome is tightly associated with the reaction center of photosystem II (PSII). PSII is a light-driven water:plastoquinone oxidoreductase that uses light energy to abstract electrons from H(2)O, generating O(2) and a proton gradient subsequently used for ATP formation. It consists of a core antenna complex that captures photons, and an electron transfer chain that converts photonic excitation into a charge separation. The polypeptide is Cytochrome b559 subunit alpha (Guillardia theta (Cryptophyte)).